The primary structure comprises 110 residues: Small ribosomal subunit protein eS25 (110 aa).

The segment at 1–38 (MGGKKKPTLSQLAKKAEKEKAQQAQKAKKEVKKEETPA) is disordered. Residues 14 to 38 (KKAEKEKAQQAQKAKKEVKKEETPA) show a composition bias toward basic and acidic residues.

Belongs to the eukaryotic ribosomal protein eS25 family.

The protein is Small ribosomal subunit protein eS25 (rps25e) of Pyrobaculum aerophilum (strain ATCC 51768 / DSM 7523 / JCM 9630 / CIP 104966 / NBRC 100827 / IM2).